Here is a 213-residue protein sequence, read N- to C-terminus: Protein FAM156A/FAM156B (213 aa).

N-acetylmethionine is present on methionine 1. A disordered region spans residues 1-62 (MDPLQKRNPA…SQAVPLPEGL (62 aa)). Residues 8–37 (NPASPSKSSPMTAAETSQEGPAPSQPSYSE) show a composition bias toward polar residues. Residue serine 114 is modified to Phosphoserine. The chain crosses the membrane as a helical span at residues 154–170 (WETLVQGLSGLTLSLGT). A disordered region spans residues 165-198 (TLSLGTNQPGPLPEAALQPQETEEKRQRERQQES). Residues 186-197 (TEEKRQRERQQE) are compositionally biased toward basic and acidic residues.

The protein resides in the membrane. In Homo sapiens (Human), this protein is Protein FAM156A/FAM156B (FAM156A).